The sequence spans 419 residues: Zinc finger protein Pegasus (419 aa).

K5 is covalently cross-linked (Glycyl lysine isopeptide (Lys-Gly) (interchain with G-Cter in SUMO2)). Residues 36-55 (DKEAETLQGAGTDGDQNGLD) form a disordered region. 3 C2H2-type zinc fingers span residues 82 to 104 (LKCR…IRIH), 110 to 132 (HRCH…MRSH), and 138 to 161 (YKCE…RRKH). Residue K185 forms a Glycyl lysine isopeptide (Lys-Gly) (interchain with G-Cter in SUMO2) linkage. The segment covering 262-273 (LSSLPPENQNPA) has biased composition (polar residues). Disordered regions lie at residues 262–284 (LSSL…PDEK) and 297–356 (VSAV…PTLP). A compositionally biased stretch (low complexity) spans 297–311 (VSAVSASIPQSSSPT). The span at 332–349 (SEPSAHTSTPSIGNSQPS) shows a compositional bias: polar residues. 2 consecutive C2H2-type zinc fingers follow at residues 364–386 (HHCQ…MGCH) and 392–416 (FQCN…RGQH).

The protein belongs to the Ikaros C2H2-type zinc-finger protein family. As to quaternary structure, self-associates. Interacts with other family members; IKZF1, IKZF2, IKZF3 and IKZF4.

The protein localises to the nucleus. Transcriptional repressor that binds the core 5'GNNTGTNG-3' DNA consensus sequence. Involved in megakaryocyte differentiation. The polypeptide is Zinc finger protein Pegasus (Ikzf5) (Mus musculus (Mouse)).